A 189-amino-acid polypeptide reads, in one-letter code: Elongation factor P (189 aa).

The protein belongs to the elongation factor P family.

The protein resides in the cytoplasm. The protein operates within protein biosynthesis; polypeptide chain elongation. In terms of biological role, involved in peptide bond synthesis. Stimulates efficient translation and peptide-bond synthesis on native or reconstituted 70S ribosomes in vitro. Probably functions indirectly by altering the affinity of the ribosome for aminoacyl-tRNA, thus increasing their reactivity as acceptors for peptidyl transferase. This is Elongation factor P from Xanthobacter autotrophicus (strain ATCC BAA-1158 / Py2).